The chain runs to 46 residues: Cuticle protein 4.9 (46 aa).

In terms of biological role, component of the cuticle of migratory locust which contains more than 100 different structural proteins. This chain is Cuticle protein 4.9, found in Locusta migratoria (Migratory locust).